The sequence spans 509 residues: Ribonuclease Y (509 aa).

A helical membrane pass occupies residues 5–25 (IIILLSVFCGIFFICFIICSS). The 61-residue stretch at 199-259 (TTNIVKLPSD…IRREIATRTL (61 aa)) folds into the KH domain. The HD domain maps to 325–418 (VLAHSIEVAK…VAIADSISAS (94 aa)).

The protein belongs to the RNase Y family.

Its subcellular location is the cell membrane. In terms of biological role, endoribonuclease that initiates mRNA decay. In Mycoplasma mycoides subsp. mycoides SC (strain CCUG 32753 / NCTC 10114 / PG1), this protein is Ribonuclease Y.